The chain runs to 397 residues: 4-hydroxyphenylpyruvate dioxygenase (397 aa).

VOC domains are found at residues 18-149 (NFHH…FVEY) and 181-339 (FIDH…IFTK). The Fe cation site is built by histidine 184, histidine 267, and glutamate 350.

This sequence belongs to the 4HPPD family. As to quaternary structure, homodimer. Requires Fe cation as cofactor.

The protein localises to the cytoplasm. It localises to the endoplasmic reticulum membrane. Its subcellular location is the golgi apparatus membrane. It catalyses the reaction 3-(4-hydroxyphenyl)pyruvate + O2 = homogentisate + CO2. Its pathway is amino-acid degradation; L-phenylalanine degradation; acetoacetate and fumarate from L-phenylalanine: step 3/6. Functionally, catalyzes the conversion of 4-hydroxyphenylpyruvic acid to homogentisic acid, one of the steps in tyrosine catabolism. The polypeptide is 4-hydroxyphenylpyruvate dioxygenase (hpd) (Danio rerio (Zebrafish)).